We begin with the raw amino-acid sequence, 306 residues long: Pantothenate kinase (306 aa).

90 to 97 (GSVAVGKS) is an ATP binding site.

Belongs to the prokaryotic pantothenate kinase family.

The protein localises to the cytoplasm. It carries out the reaction (R)-pantothenate + ATP = (R)-4'-phosphopantothenate + ADP + H(+). It participates in cofactor biosynthesis; coenzyme A biosynthesis; CoA from (R)-pantothenate: step 1/5. This chain is Pantothenate kinase, found in Listeria monocytogenes serotype 4b (strain CLIP80459).